A 387-amino-acid chain; its full sequence is Chaperone protein DnaJ (387 aa).

Residues 4-68 (DFYDVLGVSR…EKRQMYDQLG (65 aa)) enclose the J domain. Residues 76-135 (EKRGGVGGGGNSSGGSARGDPFGGMGGQGSPFGDIFEQFFGGGQGQRRQGNRPRQGQNLQ) are disordered. The span at 80–105 (GVGGGGNSSGGSARGDPFGGMGGQGS) shows a compositional bias: gly residues. Low complexity predominate over residues 121–133 (QRRQGNRPRQGQN). Residues 148 to 230 (GVEKQFTVRR…CNGDGVTRQE (83 aa)) form a CR-type zinc finger. Positions 161, 164, 178, 181, 204, 207, 218, and 221 each coordinate Zn(2+). CXXCXGXG motif repeat units follow at residues 161–168 (CPDCNGRG), 178–185 (CPQCNGQG), 204–211 (CPRCDGSG), and 218–225 (CSTCNGDG).

This sequence belongs to the DnaJ family. In terms of assembly, homodimer. Requires Zn(2+) as cofactor.

It is found in the cytoplasm. Functionally, participates actively in the response to hyperosmotic and heat shock by preventing the aggregation of stress-denatured proteins and by disaggregating proteins, also in an autonomous, DnaK-independent fashion. Unfolded proteins bind initially to DnaJ; upon interaction with the DnaJ-bound protein, DnaK hydrolyzes its bound ATP, resulting in the formation of a stable complex. GrpE releases ADP from DnaK; ATP binding to DnaK triggers the release of the substrate protein, thus completing the reaction cycle. Several rounds of ATP-dependent interactions between DnaJ, DnaK and GrpE are required for fully efficient folding. Also involved, together with DnaK and GrpE, in the DNA replication of plasmids through activation of initiation proteins. This chain is Chaperone protein DnaJ, found in Haloquadratum walsbyi (strain DSM 16790 / HBSQ001).